A 470-amino-acid chain; its full sequence is MTPSSVTLNCSNCSHVLAPELNTVKAVVLGMVLGIFILFGVIGNILVILSVVCHRHLQTVTYYFIVNLAVADLLLSSTVLPFSAIFEILDRWVFGRVFCNIWAAVDVLCCTASIMSLCVISVDRYIGVSYPLRYPAIMTKRRALLAVMLLWVLSVIISIGPLFGWKEPAPEDETVCKITEEPGYAIFSAVGSFYLPLAIILAMYCRVYVVAQKESRGLKEGQKIEKSDSEQVILRMHRGNTTVSEDEALRSRTHFALRLLKFSREKKAAKTLGIVVGCFVLCWLPFFLVLPIGSIFPAYRPSDTVFKITFWLGYFNSCINPIIYLCSNQEFKKAFQSLLGVHCLRMTPRAHHHHLSVGQSQTQGHSLTISLDSKGAPCRLSPSSSVALSRTPSSRDSREWRVFSGGPINSGPGPTEAGRAKVAKLCNKSLHRTCCCILRARTPTQDPAPLGDLPTIKIHQLSLSEKGESV.

The Extracellular segment spans residues 1 to 27 (MTPSSVTLNCSNCSHVLAPELNTVKAV). 2 N-linked (GlcNAc...) asparagine glycosylation sites follow: asparagine 9 and asparagine 12. Residues 28-51 (VLGMVLGIFILFGVIGNILVILSV) form a helical membrane-spanning segment. Topologically, residues 52–64 (VCHRHLQTVTYYF) are cytoplasmic. Residues 65–88 (IVNLAVADLLLSSTVLPFSAIFEI) traverse the membrane as a helical segment. The Extracellular portion of the chain corresponds to 89-99 (LDRWVFGRVFC). A disulfide bond links cysteine 99 and cysteine 176. A helical membrane pass occupies residues 100–122 (NIWAAVDVLCCTASIMSLCVISV). Topologically, residues 123-143 (DRYIGVSYPLRYPAIMTKRRA) are cytoplasmic. A helical membrane pass occupies residues 144–167 (LLAVMLLWVLSVIISIGPLFGWKE). Topologically, residues 168–181 (PAPEDETVCKITEE) are extracellular. Residues 182 to 205 (PGYAIFSAVGSFYLPLAIILAMYC) traverse the membrane as a helical segment. The Cytoplasmic portion of the chain corresponds to 206–271 (RVYVVAQKES…FSREKKAAKT (66 aa)). Residues 272 to 295 (LGIVVGCFVLCWLPFFLVLPIGSI) form a helical membrane-spanning segment. Over 296-303 (FPAYRPSD) the chain is Extracellular. Residues 304–327 (TVFKITFWLGYFNSCINPIIYLCS) form a helical membrane-spanning segment. Residues 328 to 470 (NQEFKKAFQS…LSLSEKGESV (143 aa)) are Cytoplasmic-facing. Cysteine 343 is lipidated: S-palmitoyl cysteine. Residues 375-416 (GAPCRLSPSSSVALSRTPSSRDSREWRVFSGGPINSGPGPTE) form a disordered region. The segment covering 381–392 (SPSSSVALSRTP) has biased composition (polar residues).

The protein belongs to the G-protein coupled receptor 1 family. Adrenergic receptor subfamily. ADRA1A sub-subfamily.

The protein localises to the cell membrane. Functionally, this alpha-adrenergic receptor mediates its action by association with G proteins that activate a phosphatidylinositol-calcium second messenger system. This Oryzias latipes (Japanese rice fish) protein is Alpha-1A adrenergic receptor (adra1a).